A 266-amino-acid polypeptide reads, in one-letter code: Single-stranded DNA-binding protein WHY1, chloroplastic (266 aa).

Residues 1-37 (MPPPAPLFLSLASTPPPALMPVHHPRAPQSLTLVPPV) constitute a chloroplast transit peptide. Residues 53–81 (SPRHSDYFDPRAPPPPRGDGGYGRPPNGA) are disordered. The interval 94-99 (KGKAAL) is required for ssDNA binding. A Nuclear localization signal motif is present at residues 172 to 185 (KGRSEEGKVRKVLK).

The protein belongs to the Whirly family. As to quaternary structure, homotetramer.

Its subcellular location is the plastid. The protein resides in the chloroplast stroma. The protein localises to the nucleus. Single-stranded DNA and RNA binding protein that maintains plastid genome stability by preventing break-induced and short homology-dependent illegitimate recombinations. Functions in RNA metabolism and is involved in the maturation of the atpF and 23S ribosomal RNAs. The chain is Single-stranded DNA-binding protein WHY1, chloroplastic (WHY1) from Zea mays (Maize).